Here is a 78-residue protein sequence, read N- to C-terminus: Small ribosomal subunit protein bS18 (78 aa).

This sequence belongs to the bacterial ribosomal protein bS18 family. As to quaternary structure, part of the 30S ribosomal subunit. Forms a tight heterodimer with protein bS6.

Its function is as follows. Binds as a heterodimer with protein bS6 to the central domain of the 16S rRNA, where it helps stabilize the platform of the 30S subunit. The protein is Small ribosomal subunit protein bS18 of Levilactobacillus brevis (strain ATCC 367 / BCRC 12310 / CIP 105137 / JCM 1170 / LMG 11437 / NCIMB 947 / NCTC 947) (Lactobacillus brevis).